We begin with the raw amino-acid sequence, 280 residues long: MPELPEVETVRKGLEKLVVGKTIQEVIVFWPRIIESPEVDVFQGQLAGQTIEGIERRGKFLIFKLSDNDMISHLRMEGKYEFHQADDEIAKHTHVMFTFTDGTQLRYLDVRKFGRMTLVPKNQGHQYKGILALGPEPTPDVFQLATFQQGLKKHHKAIKPLLLDQKLVTGLGNIYVDEALWQAQIHPEQPADSLKPAEVATLYQAIIDVLARAVEAGGTTIRTYLNALGEAGTFQVALNVYGQTGLPCNRCGTPIVKTKVAQRGTHYCPQCQQLKGRRLK.

Catalysis depends on proline 2, which acts as the Schiff-base intermediate with DNA. The active-site Proton donor is the glutamate 3. Lysine 59 (proton donor; for beta-elimination activity) is an active-site residue. Positions 92 and 111 each coordinate DNA. The segment at 239-273 adopts an FPG-type zinc-finger fold; it reads NVYGQTGLPCNRCGTPIVKTKVAQRGTHYCPQCQQ. The Proton donor; for delta-elimination activity role is filled by arginine 263.

This sequence belongs to the FPG family. In terms of assembly, monomer. Zn(2+) serves as cofactor.

It carries out the reaction Hydrolysis of DNA containing ring-opened 7-methylguanine residues, releasing 2,6-diamino-4-hydroxy-5-(N-methyl)formamidopyrimidine.. The catalysed reaction is 2'-deoxyribonucleotide-(2'-deoxyribose 5'-phosphate)-2'-deoxyribonucleotide-DNA = a 3'-end 2'-deoxyribonucleotide-(2,3-dehydro-2,3-deoxyribose 5'-phosphate)-DNA + a 5'-end 5'-phospho-2'-deoxyribonucleoside-DNA + H(+). Functionally, involved in base excision repair of DNA damaged by oxidation or by mutagenic agents. Acts as a DNA glycosylase that recognizes and removes damaged bases. Has a preference for oxidized purines, such as 7,8-dihydro-8-oxoguanine (8-oxoG). Has AP (apurinic/apyrimidinic) lyase activity and introduces nicks in the DNA strand. Cleaves the DNA backbone by beta-delta elimination to generate a single-strand break at the site of the removed base with both 3'- and 5'-phosphates. The protein is Formamidopyrimidine-DNA glycosylase of Enterococcus faecalis (strain ATCC 700802 / V583).